Reading from the N-terminus, the 459-residue chain is Alpha,alpha-trehalose-phosphate synthase [UDP-forming] (459 aa).

The D-glucose 6-phosphate site is built by Y86 and D140. UDP contacts are provided by R262 and K267. R262 and K267 together coordinate UDP-alpha-D-glucose. Residue R300 coordinates D-glucose 6-phosphate. Residue 361–369 (DGMNLVALE) coordinates UDP-alpha-D-glucose. A UDP-binding site is contributed by 365-369 (LVALE).

This sequence belongs to the glycosyltransferase 20 family. Component of the trehalose synthase complex.

Its subcellular location is the cytoplasm. It carries out the reaction D-glucose 6-phosphate + UDP-alpha-D-glucose = alpha,alpha-trehalose 6-phosphate + UDP + H(+). Its function is as follows. Synthase catalytic subunit of the trehalose synthase complex that catalyzes the production of trehalose from glucose-6-phosphate and UDP-alpha-D-glucose in a two step process. Can function independently of the complex. The sequence is that of Alpha,alpha-trehalose-phosphate synthase [UDP-forming] (TPS1) from Encephalitozoon cuniculi (strain GB-M1) (Microsporidian parasite).